Consider the following 396-residue polypeptide: MFENITAAPADPILGLADLFRADDRPGKINLGIGVYKDETGKTPVLTSVKKAEQYLLENETTKNYLGIDGIPEFARCTQELLFGKGSALINDKRARTAQTPGGTGALRIAADFLAKNTPVKRVWVSNPSWPNHKSVFNAAGLEVREYAYYDAENHSLDFEALQASLSEAQAGDVVLFHGCCHNPTGIDPTLEQWQVLAELSVEKGWLPLFDFAYQGFARGLEEDAEGLRAFAALHKELIVASSYSKNFGLYNERVGACTLVAADAETVDRAFSQMKSAIRANYSNPPAHGASIVATILSNDALRAIWEQELTDMRQRIQRMRQLFVNTLQEKGANRDFSFIIKQNGMFSFSGLTKDQVLRLREEFGVYAVASGRVNVAGMTPDNMAPLCEAIVAVL.

Gly-34, Trp-130, and Asn-183 together coordinate L-aspartate. An N6-(pyridoxal phosphate)lysine modification is found at Lys-246. Arg-374 contacts L-aspartate.

It belongs to the class-I pyridoxal-phosphate-dependent aminotransferase family. As to quaternary structure, homodimer. Pyridoxal 5'-phosphate is required as a cofactor.

It is found in the cytoplasm. The enzyme catalyses L-aspartate + 2-oxoglutarate = oxaloacetate + L-glutamate. This chain is Aspartate aminotransferase (aspC), found in Salmonella typhi.